The chain runs to 315 residues: DNA-directed RNA polymerase subunit alpha (315 aa).

The tract at residues 1–227 (MTQFQIECVE…NLFNPFKKIN (227 aa)) is alpha N-terminal domain (alpha-NTD). The alpha C-terminal domain (alpha-CTD) stretch occupies residues 239–315 (EDKISQIPIE…PKRKTNKKEN (77 aa)).

The protein belongs to the RNA polymerase alpha chain family. In terms of assembly, in plastids the minimal PEP RNA polymerase catalytic core is composed of four subunits: alpha, beta, beta', and beta''. When a (nuclear-encoded) sigma factor is associated with the core the holoenzyme is formed, which can initiate transcription.

Its subcellular location is the plastid. The protein resides in the cyanelle. It catalyses the reaction RNA(n) + a ribonucleoside 5'-triphosphate = RNA(n+1) + diphosphate. Functionally, DNA-dependent RNA polymerase catalyzes the transcription of DNA into RNA using the four ribonucleoside triphosphates as substrates. The polypeptide is DNA-directed RNA polymerase subunit alpha (Cyanophora paradoxa).